We begin with the raw amino-acid sequence, 193 residues long: Potassium-transporting ATPase KdpC subunit (193 aa).

Residues 7-27 traverse the membrane as a helical segment; sequence PLVVLFVVLNAVTGLAYPAVM.

This sequence belongs to the KdpC family. The system is composed of three essential subunits: KdpA, KdpB and KdpC.

The protein localises to the cell inner membrane. Part of the high-affinity ATP-driven potassium transport (or Kdp) system, which catalyzes the hydrolysis of ATP coupled with the electrogenic transport of potassium into the cytoplasm. This subunit acts as a catalytic chaperone that increases the ATP-binding affinity of the ATP-hydrolyzing subunit KdpB by the formation of a transient KdpB/KdpC/ATP ternary complex. The protein is Potassium-transporting ATPase KdpC subunit of Burkholderia cenocepacia (strain HI2424).